A 205-amino-acid polypeptide reads, in one-letter code: Bacterial microcompartment protein trimer-1 (205 aa).

The interval 1 to 20 (MDHAPERFDATPPAGEPDRP) is disordered. BMC domains lie at 21–106 (ALGV…RFLD) and 120–204 (SVII…GRLF).

This sequence belongs to the bacterial microcompartments protein family. Homotrimerizes to form a pseudohexamer. Unlike its paralogs BMC-T2 and BMC-T3, the pseudohexamers do not stack. The concave side faces outward, with the N- and C-terminii exposed to the cytoplasm.

The protein localises to the bacterial microcompartment. Functionally, a minor component of the bacterial microcompartment (BMC) shell. Expression of 5 proteins in E.coli (BMC-H (Hoch_5815), BMC-P (Hoch_5814), and 3 BMC-T (Hoch_5812, Hoch_5816, Hoch_3341)) forms 40 nm artificial BMCs with a molecular mass of 6.5 MDa. This protein does not form stacked pseudohexamers in the BMC. There are 20 BMC-T pseudohexamers per BMC, composed of mixed BMC-T1, BMC-T2 and BMC-T3. The shell facets are 20-30 Angstroms thick, with 1 of BMC-T trimers protruding to the exterior. This chain is Bacterial microcompartment protein trimer-1, found in Haliangium ochraceum (strain DSM 14365 / JCM 11303 / SMP-2).